We begin with the raw amino-acid sequence, 344 residues long: Dihydroorotate dehydrogenase (quinone) (344 aa).

FMN is bound by residues 65-69 (AGFDK) and Thr-89. Residue Lys-69 participates in substrate binding. Substrate is bound at residue 114–118 (NRMGF). FMN-binding residues include Asn-145 and Asn-178. Position 178 (Asn-178) interacts with substrate. Ser-181 functions as the Nucleophile in the catalytic mechanism. Asn-183 contacts substrate. Residues Lys-215 and Thr-243 each coordinate FMN. 244 to 245 (NT) provides a ligand contact to substrate. FMN contacts are provided by residues Gly-269, Gly-298, and 319-320 (YT).

Belongs to the dihydroorotate dehydrogenase family. Type 2 subfamily. As to quaternary structure, monomer. The cofactor is FMN.

The protein resides in the cell membrane. The catalysed reaction is (S)-dihydroorotate + a quinone = orotate + a quinol. Its pathway is pyrimidine metabolism; UMP biosynthesis via de novo pathway; orotate from (S)-dihydroorotate (quinone route): step 1/1. In terms of biological role, catalyzes the conversion of dihydroorotate to orotate with quinone as electron acceptor. The protein is Dihydroorotate dehydrogenase (quinone) of Clavibacter sepedonicus (Clavibacter michiganensis subsp. sepedonicus).